The following is a 294-amino-acid chain: Proline iminopeptidase (294 aa).

In terms of domain architecture, AB hydrolase-1 spans 27 to 277 (PPLVLLHGGP…GCGHMSFVEK (251 aa)). The Nucleophile role is filled by serine 105. The active site involves aspartate 244. The active-site Proton donor is the histidine 271.

The protein belongs to the peptidase S33 family.

The protein localises to the cell envelope. The catalysed reaction is Release of N-terminal proline from a peptide.. Functionally, releases the N-terminal proline from various substrates. In Lactobacillus helveticus (strain DPC 4571), this protein is Proline iminopeptidase.